A 299-amino-acid chain; its full sequence is Acetylglutamate kinase (299 aa).

Substrate is bound by residues 68 to 69, Arg-90, and Asn-194; that span reads GG.

Belongs to the acetylglutamate kinase family. ArgB subfamily.

Its subcellular location is the cytoplasm. The catalysed reaction is N-acetyl-L-glutamate + ATP = N-acetyl-L-glutamyl 5-phosphate + ADP. Its pathway is amino-acid biosynthesis; L-arginine biosynthesis; N(2)-acetyl-L-ornithine from L-glutamate: step 2/4. In terms of biological role, catalyzes the ATP-dependent phosphorylation of N-acetyl-L-glutamate. In Psychrobacter cryohalolentis (strain ATCC BAA-1226 / DSM 17306 / VKM B-2378 / K5), this protein is Acetylglutamate kinase.